Reading from the N-terminus, the 530-residue chain is [Pyruvate dehydrogenase [acetyl-transferring]]-phosphatase 2, mitochondrial (530 aa).

A mitochondrion-targeting transit peptide spans 1 to 67 (MSSTASYRIF…FALRKAYRHT (67 aa)). The PPM-type phosphatase domain occupies 107–518 (VLRFESNQLA…DDITVMVVFF (412 aa)). Mn(2+)-binding residues include Asp142, Gly143, Asp413, and Asp509.

Belongs to the PP2C family. Mg(2+) serves as cofactor. Highly expressed in liver.

The protein localises to the mitochondrion. The catalysed reaction is O-phospho-L-seryl-[pyruvate dehydrogenase E1 alpha subunit] + H2O = L-seryl-[pyruvate dehydrogenase E1 alpha subunit] + phosphate. Mg(2+)-dependent protein phosphatase. Phosphatase activity is increased in the presence of spermine, a naturally produced polyamine. In terms of biological role, mitochondrial enzyme that catalyzes the dephosphorylation and concomitant reactivation of the alpha subunit of the E1 component of the pyruvate dehydrogenase complex (PDC), thereby stimulating the conversion of pyruvate into acetyl-CoA. Acts as a crucial regulator of T cell metabolism and function, with a particular focus on T-helper Th17. This chain is [Pyruvate dehydrogenase [acetyl-transferring]]-phosphatase 2, mitochondrial (Pdp2), found in Rattus norvegicus (Rat).